We begin with the raw amino-acid sequence, 283 residues long: Nickel/cobalt efflux system RcnA (283 aa).

Residues 1-12 are Periplasmic-facing; it reads MTEFTTLLQQGN. A helical membrane pass occupies residues 13–33; that stretch reads AWFFIPSAILLGALHGLEPGH. Topologically, residues 34-56 are cytoplasmic; sequence SKTMMAAFIIAIKGTIKQAVMLG. Residues 57-77 traverse the membrane as a helical segment; that stretch reads LAATISHTAVVWLIAFGGMVI. Residues 78–86 lie on the Periplasmic side of the membrane; it reads SKRFTAQSA. The chain crosses the membrane as a helical span at residues 87–107; that stretch reads EPWLQLISAVIIISTAFWMFW. Topologically, residues 108 to 184 are cytoplasmic; sequence RTWRGERNWL…DGREVTNWQI (77 aa). The segment at 127 to 162 is disordered; it reads DHEHHQDHDHDHDHDHDHEHHHHHEHGDNEEYQDAH. 2 stretches are compositionally biased toward basic and acidic residues: residues 129 to 144 and 151 to 162; these read EHHQDHDHDHDHDHDH and EHGDNEEYQDAH. Residues 185 to 205 form a helical membrane-spanning segment; sequence LLFGLTGGLIPCPAAITVLLI. Over 206–218 the chain is Periplasmic; that stretch reads CIQLKALTLGATL. The chain crosses the membrane as a helical span at residues 219-239; sequence VVSFSIGLALTLVTVGVGAAI. Residues 240–260 are Cytoplasmic-facing; sequence SVQQVAKRWSGFNTLAKRAPY. A helical membrane pass occupies residues 261–281; sequence FSSLLIGLVGVYMGVHGFMGI. At 282–283 the chain is on the periplasmic side; sequence MR.

It belongs to the NiCoT transporter (TC 2.A.52) family. RcnA subfamily.

The protein resides in the cell inner membrane. In terms of biological role, efflux system for nickel and cobalt. The chain is Nickel/cobalt efflux system RcnA (rcnA) from Escherichia coli O157:H7.